A 275-amino-acid polypeptide reads, in one-letter code: 2-dehydro-3-deoxyphosphooctonate aldolase (275 aa).

It belongs to the KdsA family.

The protein resides in the cytoplasm. It catalyses the reaction D-arabinose 5-phosphate + phosphoenolpyruvate + H2O = 3-deoxy-alpha-D-manno-2-octulosonate-8-phosphate + phosphate. The protein operates within carbohydrate biosynthesis; 3-deoxy-D-manno-octulosonate biosynthesis; 3-deoxy-D-manno-octulosonate from D-ribulose 5-phosphate: step 2/3. Its pathway is bacterial outer membrane biogenesis; lipopolysaccharide biosynthesis. In Francisella tularensis subsp. novicida (strain U112), this protein is 2-dehydro-3-deoxyphosphooctonate aldolase.